A 348-amino-acid polypeptide reads, in one-letter code: Phenylalanine--tRNA ligase alpha subunit (348 aa).

Glu-262 contributes to the Mg(2+) binding site.

The protein belongs to the class-II aminoacyl-tRNA synthetase family. Phe-tRNA synthetase alpha subunit type 1 subfamily. In terms of assembly, tetramer of two alpha and two beta subunits. It depends on Mg(2+) as a cofactor.

The protein localises to the cytoplasm. The enzyme catalyses tRNA(Phe) + L-phenylalanine + ATP = L-phenylalanyl-tRNA(Phe) + AMP + diphosphate + H(+). In Streptococcus pneumoniae (strain 70585), this protein is Phenylalanine--tRNA ligase alpha subunit.